Consider the following 193-residue polypeptide: FMN-dependent NADH:quinone oxidoreductase (193 aa).

Residues Ser9, 15-17, and 137-140 each bind FMN; these read SSS and TSGG.

It belongs to the azoreductase type 1 family. In terms of assembly, homodimer. FMN serves as cofactor.

It carries out the reaction 2 a quinone + NADH + H(+) = 2 a 1,4-benzosemiquinone + NAD(+). The enzyme catalyses N,N-dimethyl-1,4-phenylenediamine + anthranilate + 2 NAD(+) = 2-(4-dimethylaminophenyl)diazenylbenzoate + 2 NADH + 2 H(+). In terms of biological role, quinone reductase that provides resistance to thiol-specific stress caused by electrophilic quinones. Functionally, also exhibits azoreductase activity. Catalyzes the reductive cleavage of the azo bond in aromatic azo compounds to the corresponding amines. The sequence is that of FMN-dependent NADH:quinone oxidoreductase from Pelagibacter ubique (strain HTCC1062).